The following is a 298-amino-acid chain: Heat stress transcription factor C-2a (298 aa).

The disordered stretch occupies residues 105–128; sequence SSGGGGAKRKEEAGGCGGGGEAAA. The hydrophobic repeat HR-A/B stretch occupies residues 145 to 181; it reads LRREQREIEGRVAAMWRRVQETERRPKQMLAFLVKVV. The short motif at 213–216 is the Nuclear localization signal element; it reads KRPR.

This sequence belongs to the HSF family. Class C subfamily. Homotrimer. In terms of processing, exhibits temperature-dependent phosphorylation.

The protein localises to the nucleus. In terms of biological role, transcriptional regulator that specifically binds DNA of heat shock promoter elements (HSE). This Oryza sativa subsp. japonica (Rice) protein is Heat stress transcription factor C-2a (HSFC2A).